The following is a 381-amino-acid chain: Alkanesulfonate monooxygenase (381 aa).

The protein belongs to the SsuD family. As to quaternary structure, homotetramer.

The enzyme catalyses an alkanesulfonate + FMNH2 + O2 = an aldehyde + FMN + sulfite + H2O + 2 H(+). Functionally, catalyzes the desulfonation of aliphatic sulfonates. The protein is Alkanesulfonate monooxygenase of Escherichia coli O81 (strain ED1a).